We begin with the raw amino-acid sequence, 1778 residues long: Protein TIC 214 (1778 aa).

6 helical membrane-spanning segments follow: residues 18–38 (IINSVVVVGLYYGFLTTFSIG), 67–87 (FIAGQLMMFISIYYAPLHLAL), 90–110 (PHTITVLALPYLLFHFFWNNN), 132–152 (VFLNNLIFQLFNHFILPSSML), 175–195 (VGWLIGHILFMKWVGLVLVWI), and 226–246 (IFSILLFITCVYYLGRIPSPI). The tract at residues 1498-1520 (GQGELESDNEKKRNPESALSNQE) is disordered.

This sequence belongs to the TIC214 family. Part of the Tic complex.

The protein localises to the plastid. Its subcellular location is the chloroplast inner membrane. Functionally, involved in protein precursor import into chloroplasts. May be part of an intermediate translocation complex acting as a protein-conducting channel at the inner envelope. The polypeptide is Protein TIC 214 (Arabis hirsuta (Hairy rock-cress)).